The chain runs to 194 residues: tRNA(Phe) 7-((3-amino-3-carboxypropyl)-4-demethylwyosine(37)-N(4))-methyltransferase 1 (194 aa).

Belongs to the TYW3 family.

It catalyses the reaction 4-demethyl-7-[(3S)-3-amino-3-carboxypropyl]wyosine(37) in tRNA(Phe) + S-adenosyl-L-methionine = 7-[(3S)-3-amino-3-carboxypropyl]wyosine(37) in tRNA(Phe) + S-adenosyl-L-homocysteine + H(+). In terms of biological role, S-adenosyl-L-methionine-dependent methyltransferase that acts as a component of the wyosine derivatives biosynthesis pathway. Probably methylates N-4 position of wybutosine-86 to produce wybutosine-72. The polypeptide is tRNA(Phe) 7-((3-amino-3-carboxypropyl)-4-demethylwyosine(37)-N(4))-methyltransferase 1 (Pyrococcus abyssi (strain GE5 / Orsay)).